We begin with the raw amino-acid sequence, 145 residues long: Ribonuclease VapC48 (145 aa).

The Mg(2+) site is built by D6 and D109. The PINc domain maps to 15-141 (HRASPFHDKA…RKFEGIRIRD (127 aa)).

Belongs to the PINc/VapC protein family. It depends on Mg(2+) as a cofactor.

Its function is as follows. Toxic component of a type II toxin-antitoxin (TA) system. An RNase. Its cognate antitoxin is VapB48. The protein is Ribonuclease VapC48 of Mycobacterium tuberculosis (strain CDC 1551 / Oshkosh).